Consider the following 353-residue polypeptide: Melanin-concentrating hormone receptor 1 (353 aa).

The disordered stretch occupies residues 1 to 28 (MDLEASLLPTGPNASNTSDGPDNLTSAG). At 1-45 (MDLEASLLPTGPNASNTSDGPDNLTSAGPPPRTGSISYVNIIMPS) the chain is on the extracellular side. The span at 12–26 (PNASNTSDGPDNLTS) shows a compositional bias: polar residues. 3 N-linked (GlcNAc...) asparagine glycosylation sites follow: N13, N16, and N23. Residues 46 to 66 (VFGTICLLGIIGNSMVIFAVV) traverse the membrane as a helical segment. Residues 67-79 (KKSKLHWFSNVPD) lie on the Cytoplasmic side of the membrane. Residues 80-100 (IFIINLSVVDLLFLLGMPFMI) traverse the membrane as a helical segment. Topologically, residues 101-116 (HQLMGNGVWHFGETMC) are extracellular. C116 and C194 are joined by a disulfide. A helical membrane pass occupies residues 117 to 139 (TLITAMDANSQFTSTYILTAMAI). The Cytoplasmic portion of the chain corresponds to 140–161 (DRYLATVHPISSTRFRKPSVAT). Residues 162 to 182 (LVICLLWALSIISITPVWLYA) form a helical membrane-spanning segment. Residues 183–204 (RLIPFPGGTVGCGIRLPNPDTD) are Extracellular-facing. Residues 205–225 (LYWFTLYQFFLAFALPFVVIT) form a helical membrane-spanning segment. At 226-256 (AAYVRILQRMTSSVAPASQRSIRLRTKRVTR) the chain is on the cytoplasmic side. Residues 257 to 277 (TAIAICLVFFVCWAPYYVLQL) form a helical membrane-spanning segment. Over 278 to 294 (TQLSISRPTLTFVYLYN) the chain is Extracellular. The chain crosses the membrane as a helical span at residues 295–315 (AAISLGYANSCLNPFVYIVLC). Residues 316 to 353 (ETFRKRLVLSVKPAAQGQLRAVSNAQTAEEERTESKGT) lie on the Cytoplasmic side of the membrane.

It belongs to the G-protein coupled receptor 1 family. Interacts with NCDN.

It localises to the cell membrane. In terms of biological role, receptor for melanin-concentrating hormone, coupled to both G proteins that inhibit adenylyl cyclase and G proteins that activate phosphoinositide hydrolysis. This Sus scrofa (Pig) protein is Melanin-concentrating hormone receptor 1.